A 359-amino-acid chain; its full sequence is Guanine nucleotide-binding protein G(q) subunit alpha (359 aa).

2 S-palmitoyl cysteine lipidation sites follow: cysteine 9 and cysteine 10. The region spanning 38-359 is the G-alpha domain; it reads RELKLLLLGT…QLNLKEYNLV (322 aa). The G1 motif stretch occupies residues 41 to 54; that stretch reads KLLLLGTGESGKST. The GTP site is built by serine 50, glycine 51, lysine 52, serine 53, threonine 54, serine 156, leucine 180, arginine 181, and arginine 183. Serine 53 contacts Mg(2+). The G2 motif stretch occupies residues 178–186; that stretch reads DVLRVRVPT. Threonine 186 lines the Mg(2+) pocket. The segment at 201–210 is G3 motif; sequence FRMVDVGGQR. Glutamine 209 is modified (5-glutamyl histamine). The segment at 270 to 277 is G4 motif; it reads ILFLNKKD. GTP-binding residues include asparagine 274, lysine 275, aspartate 277, and alanine 331. The tract at residues 329 to 334 is G5 motif; sequence TCATDT.

The protein belongs to the G-alpha family. G(q) subfamily. In terms of assembly, g proteins are composed of 3 units; alpha, beta and gamma. The alpha chain contains the guanine nucleotide binding site. Interacts (GDP-bound form) with RIC8A (via C-terminus); promoting GNAQ folding and association with the plasma membrane. Binds NHERF1. Forms a complex with PECAM1 and BDKRB2. Interacts with GAS2L2. Palmitoylated by ZDHHC3 and ZDHHC7. Palmitoylation occurs in the Golgi and participates in the localization of GNAQ to the plasma membrane. Post-translationally, histaminylated at Gln-209 residues by TGM2.

Its subcellular location is the cell membrane. It is found in the golgi apparatus. The protein resides in the nucleus. The protein localises to the nucleus membrane. The enzyme catalyses GTP + H2O = GDP + phosphate + H(+). Its function is as follows. Guanine nucleotide-binding proteins (G proteins) function as transducers downstream of G protein-coupled receptors (GPCRs) in numerous signaling cascades. The alpha chain contains the guanine nucleotide binding site and alternates between an active, GTP-bound state and an inactive, GDP-bound state. Signaling by an activated GPCR promotes GDP release and GTP binding. The alpha subunit has a low GTPase activity that converts bound GTP to GDP, thereby terminating the signal. Both GDP release and GTP hydrolysis are modulated by numerous regulatory proteins. Signaling is mediated via phospholipase C-beta-dependent inositol lipid hydrolysis for signal propagation: activates phospholipase C-beta: following GPCR activation, GNAQ activates PLC-beta (PLCB1, PLCB2, PLCB3 or PLCB4), leading to production of diacylglycerol (DAG) and inositol 1,4,5-trisphosphate (IP3). Required for platelet activation. Regulates B-cell selection and survival and is required to prevent B-cell-dependent autoimmunity. Regulates chemotaxis of BM-derived neutrophils and dendritic cells (in vitro). Transduces FFAR4 signaling in response to long-chain fatty acids (LCFAs). Together with GNA11, required for heart development. The polypeptide is Guanine nucleotide-binding protein G(q) subunit alpha (GNAQ) (Canis lupus familiaris (Dog)).